Here is a 396-residue protein sequence, read N- to C-terminus: NADH-quinone oxidoreductase subunit D (396 aa).

This sequence belongs to the complex I 49 kDa subunit family. NDH-1 is composed of 14 different subunits. Subunits NuoB, C, D, E, F, and G constitute the peripheral sector of the complex.

The protein resides in the cell inner membrane. It catalyses the reaction a quinone + NADH + 5 H(+)(in) = a quinol + NAD(+) + 4 H(+)(out). Functionally, NDH-1 shuttles electrons from NADH, via FMN and iron-sulfur (Fe-S) centers, to quinones in the respiratory chain. The immediate electron acceptor for the enzyme in this species is believed to be ubiquinone. Couples the redox reaction to proton translocation (for every two electrons transferred, four hydrogen ions are translocated across the cytoplasmic membrane), and thus conserves the redox energy in a proton gradient. This is NADH-quinone oxidoreductase subunit D from Orientia tsutsugamushi (strain Boryong) (Rickettsia tsutsugamushi).